Consider the following 246-residue polypeptide: uncharacterized protein (246 aa).

An N-terminal signal peptide occupies residues 1-30 (MKKKQVSHAIIISVMLSFVIAVFHTIHASE).

This is an uncharacterized protein from Bacillus subtilis (strain 168).